A 126-amino-acid chain; its full sequence is C-type natriuretic peptide (126 aa).

Residues 1–23 (MHLSQLLACALLLTLLSLRPSEA) form the signal peptide. The tract at residues 20-71 (PSEAKPGAPPKVPRTPPAEELAEPQAAGGGQKKGDKAPGGGGANLKGDRSRL) is disordered. The propeptide occupies 24 to 73 (KPGAPPKVPRTPPAEELAEPQAAGGGQKKGDKAPGGGGANLKGDRSRLLR). Residues 26 to 35 (GAPPKVPRTP) show a composition bias toward pro residues. Gly residues predominate over residues 46–63 (AGGGQKKGDKAPGGGGAN). C110 and C126 form a disulfide bridge.

The protein belongs to the natriuretic peptide family. Post-translationally, degraded by IDE (in vitro). In terms of tissue distribution, in the kidney, predominantly expressed in the distal tubular cells (at protein level).

It localises to the secreted. Hormone which plays a role in endochondral ossification through regulation of cartilaginous growth plate chondrocytes proliferation and differentiation. May also be vasoactive and natriuretic. Acts by specifically binding and stimulating NPR2 to produce cGMP. Binds the clearance receptor NPR3. In Homo sapiens (Human), this protein is C-type natriuretic peptide (NPPC).